The primary structure comprises 174 residues: Large ribosomal subunit protein uL22 (174 aa).

This sequence belongs to the universal ribosomal protein uL22 family. As to quaternary structure, part of the 50S ribosomal subunit.

In terms of biological role, this protein binds specifically to 23S rRNA. It makes multiple contacts with different domains of the 23S rRNA in the assembled 50S subunit and ribosome. Its function is as follows. The globular domain of the protein is located near the polypeptide exit tunnel on the outside of the subunit, while an extended beta-hairpin is found that lines the wall of the exit tunnel in the center of the 70S ribosome. The chain is Large ribosomal subunit protein uL22 from Nanoarchaeum equitans (strain Kin4-M).